A 707-amino-acid polypeptide reads, in one-letter code: Signal transducer and activator of transcription A (707 aa).

The segment covering 70–89 has biased composition (polar residues); that stretch reads LNQSDQFNLGRSNNLTPRTN. The disordered stretch occupies residues 70–246; the sequence is LNQSDQFNLG…GNPNLSSPQP (177 aa). Low complexity predominate over residues 90 to 111; it reads QLQQLQQQQQQQQQPQQQQQQQ. Residues 112-121 show a composition bias toward polar residues; the sequence is TYGTQSPIHM. Residues 142–238 show a composition bias toward low complexity; it reads QQSYNNNNSN…QQQQQQQQGN (97 aa). The stretch at 242-356 forms a coiled coil; the sequence is SSPQPILDTI…IQSILNPQHS (115 aa). Residues 443–487 mediate DNA binding; it reads KFLAGTRKCSVNLKFGVNIRDLDNVTTTVESDASNPFVVITNECQ. Residues 583–686 form the SH2 domain; the sequence is WQEGIIYGYM…FLKLHKDTAL (104 aa). Tyr702 carries the post-translational modification Phosphotyrosine.

This sequence belongs to the transcription factor STAT family. In terms of assembly, monomer, in the absence of tyrosine phosphorylation. Homodimer, or heterodimer with another family member, when tyrosine phosphorylated. In terms of processing, tyrosine phosphorylated in response to cAMP. Not tyrosine phosphorylated in growing cells. Tyrosine phosphorylation is first detected at the tight mound stage, continues throughout the slug stage and early culmination, and starts to decrease at mid-culmination. Barely detectable in fruiting bodies.

Its subcellular location is the cytoplasm. The protein resides in the nucleus. Transcription factor that binds to 5'-TTGAATTGA-3' elements in the promoter region of target genes. Functions as a repressor of the ecmB gene. Regulates the differentiation of prestalk cells during development. The chain is Signal transducer and activator of transcription A (dstA) from Dictyostelium discoideum (Social amoeba).